A 257-amino-acid chain; its full sequence is Protein orai-2 (257 aa).

The next 4 helical transmembrane spans lie at 62 to 79, 94 to 114, 156 to 176, and 201 to 221; these read ASSR…VAMV, LIAF…ALLI, LGIL…FLPI, and LVST…TIHF.

It belongs to the Orai family.

The protein resides in the membrane. In terms of biological role, ca(2+) release-activated Ca(2+)-like (CRAC-like) channel subunit which mediates Ca(2+) influx and increase in Ca(2+)-selective current by synergy with the Ca(2+) sensor, stim1. The sequence is that of Protein orai-2 (orai2) from Xenopus laevis (African clawed frog).